A 282-amino-acid chain; its full sequence is Gap junction Cx32.7 protein (282 aa).

At 2 to 13 (GEWDLLGRLLDK) the chain is on the cytoplasmic side. A helical membrane pass occupies residues 14 to 36 (VQSHSTVIGKVWLTVLFVFRILV). Over 37 to 76 (LRTGADRVWGDEQSDFVCNTQQPGCENVCYDLAFPISHVR) the chain is Extracellular. A helical transmembrane segment spans residues 77–99 (FWFLQIIAVATPKLLYLGHVLHV). At 100–148 (IHAEKKMKERMKKQAELDDQTNLFLRKAYKVPKYTKSSGKISIRGRLLR) the chain is on the cytoplasmic side. Residues 149-171 (SYVYHLVAKIILEVLFIVGQYFL) form a helical membrane-spanning segment. Topologically, residues 172–203 (YGFTLDTRYVCTRFPCPHKVDCFLSRPTEKSV) are extracellular. Residues 204 to 226 (IIWFMLVAAFVSLFLSLVELFYL) traverse the membrane as a helical segment. The Cytoplasmic segment spans residues 227–282 (CVKAAKECMARRQDYTVTPVTPPLLARKSFKSHKEVFQNCVNEPASPENNMEEVHI).

It belongs to the connexin family. Alpha-type (group II) subfamily. A connexon is composed of a hexamer of connexins. In terms of tissue distribution, expressed equally in incompetent and competent ovaries.

It localises to the cell membrane. It is found in the cell junction. The protein resides in the gap junction. In terms of biological role, one gap junction consists of a cluster of closely packed pairs of transmembrane channels, the connexons, through which materials of low MW diffuse from one cell to a neighboring cell. The chain is Gap junction Cx32.7 protein from Micropogonias undulatus (Atlantic croaker).